The sequence spans 1027 residues: LLGL scribble cell polarity complex component 2 (1027 aa).

WD repeat units lie at residues 36 to 69 (SALGYSPSLRILAIGTRSGAVKLYGAPGVEFMGL), 76 to 117 (VLQI…EESF), 132 to 169 (VTEILPHSSGELLYLGTESGNVFVVQLPGFRTLHDRTI), 193 to 227 (ALQEHPRDPNQILIGYSRGLVVIWDLQGSRALSHF), 233 to 268 (LENASWQRDGCLIVTCHSDGSHCQWPVSSDTQNPEP), 282 to 324 (AITK…GQQT), 332 to 366 (VIDFTVLSEADPAAAFDDPYALVVLAEEELVVIDL), 388 to 464 (TCSH…YKLS), 508 to 583 (QKIF…FVLV), and 592 to 653 (TSLA…LRQS). Ser653 bears the Phosphoserine mark. A compositionally biased stretch (basic residues) spans 654–669 (FRRMRRSRVSSHKRRP). Residues 654–678 (FRRMRRSRVSSHKRRPGGPTGEAQA) form a disordered region. WD repeat units lie at residues 715–771 (VRTL…KEIQ), 780–832 (GILV…VSAK), 837–890 (LTAL…VRYS), and 904–927 (VFTKYGQGFYLISPSEFERFSLST). Residues 940–981 (TKAKKHNRPSNGNGTGLKMTSSGHVRNSKSQSDGDEKKPGPV) form a disordered region. The span at 957–970 (KMTSSGHVRNSKSQ) shows a compositional bias: polar residues. Ser971 and Ser1022 each carry phosphoserine.

It belongs to the WD repeat L(2)GL family. In terms of assembly, interacts with GPSM2/LGN, PRKCI/aPKC and PARD6B/Par-6. The complex is enhanced during mitosis. Interacts with DCAF1. Post-translationally, phosphorylated at Ser-653 by PRKCI. Phosphorylation is enhanced during cell polarization induced by calcium. Phosphorylation may occur during the cell-cell contact-induced cell polarization and may contribute to the segregation of LLGL2 from the PRKCI/aPKC and PARD6B/Par-6 complex.

The protein localises to the cytoplasm. In terms of biological role, part of a complex with GPSM2/LGN, PRKCI/aPKC and PARD6B/Par-6, which may ensure the correct organization and orientation of bipolar spindles for normal cell division. This complex plays roles in the initial phase of the establishment of epithelial cell polarity. In Mus musculus (Mouse), this protein is LLGL scribble cell polarity complex component 2 (Llgl2).